Consider the following 229-residue polypeptide: Large ribosomal subunit protein uL1 (229 aa).

Belongs to the universal ribosomal protein uL1 family. In terms of assembly, part of the 50S ribosomal subunit.

Its function is as follows. Binds directly to 23S rRNA. The L1 stalk is quite mobile in the ribosome, and is involved in E site tRNA release. Functionally, protein L1 is also a translational repressor protein, it controls the translation of the L11 operon by binding to its mRNA. This chain is Large ribosomal subunit protein uL1, found in Clostridium tetani (strain Massachusetts / E88).